A 248-amino-acid chain; its full sequence is 2,3-bisphosphoglycerate-dependent phosphoglycerate mutase (248 aa).

Substrate contacts are provided by residues 8–15 and Arg58; that span reads RHGESGWN. His9 acts as the Tele-phosphohistidine intermediate in catalysis. Residues 82–101 form a disordered region; that stretch reads GTGEDRTEREDGSRKDRKEK. The active-site Proton donor/acceptor is Glu124. Substrate contacts are provided by residues 124 to 127 and Lys135; that span reads ERYY.

This sequence belongs to the phosphoglycerate mutase family. BPG-dependent PGAM subfamily.

The catalysed reaction is (2R)-2-phosphoglycerate = (2R)-3-phosphoglycerate. The protein operates within carbohydrate degradation; glycolysis; pyruvate from D-glyceraldehyde 3-phosphate: step 3/5. In terms of biological role, catalyzes the interconversion of 2-phosphoglycerate and 3-phosphoglycerate. This chain is 2,3-bisphosphoglycerate-dependent phosphoglycerate mutase, found in Methanosarcina acetivorans (strain ATCC 35395 / DSM 2834 / JCM 12185 / C2A).